A 433-amino-acid polypeptide reads, in one-letter code: Nuclear hormone receptor family member nhr-98 (433 aa).

The nuclear receptor DNA-binding region spans 41-116 (SKKCQICENP…FGMTIDNFQF (76 aa)). NR C4-type zinc fingers lie at residues 44-64 (CQIC…CRAC) and 80-104 (CKTE…MQRC). The 257-residue stretch at 177–433 (ETPYQVSNVL…CSHPGIFLNA (257 aa)) folds into the NR LBD domain.

The protein belongs to the nuclear hormone receptor family.

It localises to the nucleus. Functionally, orphan nuclear receptor. This chain is Nuclear hormone receptor family member nhr-98 (nhr-98), found in Caenorhabditis elegans.